The chain runs to 403 residues: NADH-quinone oxidoreductase subunit D (403 aa).

Belongs to the complex I 49 kDa subunit family. In terms of assembly, NDH-1 is composed of 14 different subunits. Subunits NuoB, C, D, E, F, and G constitute the peripheral sector of the complex.

Its subcellular location is the cell inner membrane. It carries out the reaction a quinone + NADH + 5 H(+)(in) = a quinol + NAD(+) + 4 H(+)(out). NDH-1 shuttles electrons from NADH, via FMN and iron-sulfur (Fe-S) centers, to quinones in the respiratory chain. The immediate electron acceptor for the enzyme in this species is believed to be ubiquinone. Couples the redox reaction to proton translocation (for every two electrons transferred, four hydrogen ions are translocated across the cytoplasmic membrane), and thus conserves the redox energy in a proton gradient. This chain is NADH-quinone oxidoreductase subunit D, found in Erythrobacter litoralis (strain HTCC2594).